Reading from the N-terminus, the 257-residue chain is Transmembrane protein 101 (257 aa).

8 consecutive transmembrane segments (helical) span residues 24-40 (TRCPFWGCFSQLMLYAE), 52-72 (VPYLYFDMGAAVLCASFMSFG), 77-97 (WFALGAALQLAISTYTAYIGG), 110-130 (YSRTVAIIGGFLVLASGAGEL), 139-159 (SLQSTGQVFLGIYLICVAYSL), 182-202 (LFFVLYGVLALAFLSGYYVTL), 206-226 (ILAVLLPPVMLLIDGNVSYWH), and 233-253 (FWNQMKLLGESVGIFGAAVIL).

It is found in the membrane. Functionally, may activate NF-kappa-B signaling pathways. The sequence is that of Transmembrane protein 101 (Tmem101) from Mus musculus (Mouse).